Here is a 219-residue protein sequence, read N- to C-terminus: Large ribosomal subunit protein uL3 (219 aa).

It belongs to the universal ribosomal protein uL3 family. Part of the 50S ribosomal subunit. Forms a cluster with proteins L14 and L19.

Functionally, one of the primary rRNA binding proteins, it binds directly near the 3'-end of the 23S rRNA, where it nucleates assembly of the 50S subunit. The chain is Large ribosomal subunit protein uL3 from Salinispora tropica (strain ATCC BAA-916 / DSM 44818 / JCM 13857 / NBRC 105044 / CNB-440).